The following is a 418-amino-acid chain: 1-acylglycerol-3-phosphate O-acyltransferase (418 aa).

The AB hydrolase-1 domain maps to 121 to 251 (PTLVMVHGYG…RATWKGAVLN (131 aa)). The GXSXG signature appears at 197-201 (GHSFG). Residues 379-384 (HFVFID) carry the HXXXXD motif motif.

The protein belongs to the peptidase S33 family. ABHD4/ABHD5 subfamily.

It localises to the cytoplasm. It carries out the reaction a 1-acyl-sn-glycero-3-phosphate + an acyl-CoA = a 1,2-diacyl-sn-glycero-3-phosphate + CoA. Functionally, lysophosphatidic acid acyltransferase which functions in phosphatidic acid biosynthesis. Is highly specific for lysophosphatidic acid and able to use different acyl-CoA donors. May regulate neutral lipid accumulation and participate in the regulation of lipid turnover in vegetative cells. Possesses additional triacylglycerol lipase and phospholipase A2 activities in vitro. Is not active as esterase or lysophospholipase. The chain is 1-acylglycerol-3-phosphate O-acyltransferase from Arabidopsis thaliana (Mouse-ear cress).